Consider the following 353-residue polypeptide: 3-dehydroquinate synthase (353 aa).

Residues 62–67 (DGEQYK), 96–100 (GVIGD), 120–121 (TT), K133, and K142 each bind NAD(+). Zn(2+) contacts are provided by E175, H236, and H253.

This sequence belongs to the sugar phosphate cyclases superfamily. Dehydroquinate synthase family. The cofactor is NAD(+). Co(2+) serves as cofactor. It depends on Zn(2+) as a cofactor.

It is found in the cytoplasm. It catalyses the reaction 7-phospho-2-dehydro-3-deoxy-D-arabino-heptonate = 3-dehydroquinate + phosphate. Its pathway is metabolic intermediate biosynthesis; chorismate biosynthesis; chorismate from D-erythrose 4-phosphate and phosphoenolpyruvate: step 2/7. Catalyzes the conversion of 3-deoxy-D-arabino-heptulosonate 7-phosphate (DAHP) to dehydroquinate (DHQ). The chain is 3-dehydroquinate synthase from Helicobacter hepaticus (strain ATCC 51449 / 3B1).